A 488-amino-acid polypeptide reads, in one-letter code: 3-octaprenyl-4-hydroxybenzoate carboxy-lyase (488 aa).

Mn(2+) is bound at residue asparagine 172. Residues 175–177 (IYR), 189–191 (RWL), and 194–195 (RG) contribute to the prenylated FMN site. Glutamate 238 provides a ligand contact to Mn(2+). The Proton donor role is filled by aspartate 287.

It belongs to the UbiD family. In terms of assembly, homohexamer. The cofactor is prenylated FMN. Requires Mn(2+) as cofactor.

The protein localises to the cell membrane. It catalyses the reaction a 4-hydroxy-3-(all-trans-polyprenyl)benzoate + H(+) = a 2-(all-trans-polyprenyl)phenol + CO2. The protein operates within cofactor biosynthesis; ubiquinone biosynthesis. Catalyzes the decarboxylation of 3-octaprenyl-4-hydroxy benzoate to 2-octaprenylphenol, an intermediate step in ubiquinone biosynthesis. The protein is 3-octaprenyl-4-hydroxybenzoate carboxy-lyase of Legionella pneumophila (strain Lens).